We begin with the raw amino-acid sequence, 66 residues long: Large ribosomal subunit protein bL33c (66 aa).

This sequence belongs to the bacterial ribosomal protein bL33 family.

It localises to the plastid. Its subcellular location is the chloroplast. The protein is Large ribosomal subunit protein bL33c of Welwitschia mirabilis (Tree tumbo).